The primary structure comprises 250 residues: Hydroxyacylglutathione hydrolase (250 aa).

Residues H53, H55, D57, H58, H110, D127, and H165 each coordinate Zn(2+).

The protein belongs to the metallo-beta-lactamase superfamily. Glyoxalase II family. Monomer. It depends on Zn(2+) as a cofactor.

The enzyme catalyses an S-(2-hydroxyacyl)glutathione + H2O = a 2-hydroxy carboxylate + glutathione + H(+). It participates in secondary metabolite metabolism; methylglyoxal degradation; (R)-lactate from methylglyoxal: step 2/2. Its function is as follows. Thiolesterase that catalyzes the hydrolysis of S-D-lactoyl-glutathione to form glutathione and D-lactic acid. This chain is Hydroxyacylglutathione hydrolase, found in Buchnera aphidicola subsp. Schizaphis graminum (strain Sg).